Consider the following 447-residue polypeptide: UPF0328 protein ECU10_1870 (447 aa).

2 stretches are compositionally biased toward basic and acidic residues: residues 1–10 (MPSDHPDFRS) and 64–84 (HTEGCHTHEANPEPNTKHTET). Disordered regions lie at residues 1 to 103 (MPSD…TATP) and 147 to 173 (VKSQSVSHRAPITYQPPRPTTTSNPRI). Positions 92–103 (CPPPHPGPTATP) are enriched in pro residues.

It belongs to the UPF0328 family.

The polypeptide is UPF0328 protein ECU10_1870 (Encephalitozoon cuniculi (strain GB-M1) (Microsporidian parasite)).